Consider the following 364-residue polypeptide: Coproporphyrin III ferrochelatase (364 aa).

Fe-coproporphyrin III-binding residues include arginine 29 and tyrosine 118. Positions 169 and 250 each coordinate Fe(2+).

It belongs to the ferrochelatase family.

It is found in the cytoplasm. It catalyses the reaction Fe-coproporphyrin III + 2 H(+) = coproporphyrin III + Fe(2+). Its pathway is porphyrin-containing compound metabolism; protoheme biosynthesis. In terms of biological role, involved in coproporphyrin-dependent heme b biosynthesis. Catalyzes the insertion of ferrous iron into coproporphyrin III to form Fe-coproporphyrin III. The sequence is that of Coproporphyrin III ferrochelatase from Streptococcus pneumoniae (strain 70585).